The chain runs to 266 residues: 4-hydroxy-tetrahydrodipicolinate reductase (266 aa).

Glycine 10–methionine 15 is a binding site for NAD(+). NADP(+) is bound at residue lysine 38. Residues glycine 99–threonine 101 and alanine 125–phenylalanine 128 each bind NAD(+). Catalysis depends on histidine 155, which acts as the Proton donor/acceptor. Position 156 (histidine 156) interacts with (S)-2,3,4,5-tetrahydrodipicolinate. The Proton donor role is filled by lysine 159. Glycine 165–threonine 166 is a (S)-2,3,4,5-tetrahydrodipicolinate binding site.

This sequence belongs to the DapB family.

It localises to the cytoplasm. It carries out the reaction (S)-2,3,4,5-tetrahydrodipicolinate + NAD(+) + H2O = (2S,4S)-4-hydroxy-2,3,4,5-tetrahydrodipicolinate + NADH + H(+). The catalysed reaction is (S)-2,3,4,5-tetrahydrodipicolinate + NADP(+) + H2O = (2S,4S)-4-hydroxy-2,3,4,5-tetrahydrodipicolinate + NADPH + H(+). It functions in the pathway amino-acid biosynthesis; L-lysine biosynthesis via DAP pathway; (S)-tetrahydrodipicolinate from L-aspartate: step 4/4. In terms of biological role, catalyzes the conversion of 4-hydroxy-tetrahydrodipicolinate (HTPA) to tetrahydrodipicolinate. This chain is 4-hydroxy-tetrahydrodipicolinate reductase, found in Bacillus cereus (strain ATCC 14579 / DSM 31 / CCUG 7414 / JCM 2152 / NBRC 15305 / NCIMB 9373 / NCTC 2599 / NRRL B-3711).